Consider the following 108-residue polypeptide: UPF0060 membrane protein YnfA (108 aa).

Residues 1–5 are Periplasmic-facing; the sequence is MLKTT. The helical transmembrane segment at 6–26 threads the bilayer; that stretch reads LLFFVTALCEIIGCFLPWLWI. The Cytoplasmic segment spans residues 27 to 30; the sequence is KRGA. A helical membrane pass occupies residues 31-51; sequence SVWWLLPAAASLALFVWLLTL. Residues 52-60 lie on the Periplasmic side of the membrane; that stretch reads HPAASGRVY. Residues 61-81 form a helical membrane-spanning segment; sequence AAYGGVYVCTALLWLRVVDGV. Over 82 to 84 the chain is Cytoplasmic; that stretch reads RLT. Residues 85 to 105 traverse the membrane as a helical segment; it reads VYDWCGALIALCGMLIIVVGW. Residues 106 to 108 are Periplasmic-facing; sequence GRT.

Belongs to the UPF0060 family.

It is found in the cell inner membrane. The chain is UPF0060 membrane protein YnfA from Salmonella paratyphi A (strain ATCC 9150 / SARB42).